Reading from the N-terminus, the 239-residue chain is Ribosomal RNA small subunit methyltransferase G (239 aa).

S-adenosyl-L-methionine contacts are provided by residues Gly-75, Leu-80, 126-127, and Arg-142; that span reads AE.

This sequence belongs to the methyltransferase superfamily. RNA methyltransferase RsmG family.

It is found in the cytoplasm. Specifically methylates the N7 position of guanine in position 518 of 16S rRNA. This is Ribosomal RNA small subunit methyltransferase G from Streptomyces coelicolor (strain ATCC BAA-471 / A3(2) / M145).